The chain runs to 229 residues: Large ribosomal subunit protein uL1 (229 aa).

In terms of assembly, part of the 50S ribosomal subunit.

Its function is as follows. Binds directly to 23S rRNA. The L1 stalk is quite mobile in the ribosome, and is involved in E site tRNA release. In terms of biological role, protein L1 is also a translational repressor protein, it controls the translation of the L11 operon by binding to its mRNA. The sequence is that of Large ribosomal subunit protein uL1 from Rhodopseudomonas palustris (strain ATCC BAA-98 / CGA009).